The following is a 464-amino-acid chain: Siroheme synthase (464 aa).

Positions 1–203 (MDYLPLFHKL…GQGAEAERLL (203 aa)) are precorrin-2 dehydrogenase /sirohydrochlorin ferrochelatase. NAD(+) contacts are provided by residues 22–23 (EI) and 43–44 (PE). Residue serine 128 is modified to Phosphoserine. Residues 216 to 464 (GEVYLVGAGP…AWFEGSQQDQ (249 aa)) are uroporphyrinogen-III C-methyltransferase. Residue proline 225 coordinates S-adenosyl-L-methionine. The active-site Proton acceptor is the aspartate 248. Lysine 270 functions as the Proton donor in the catalytic mechanism. S-adenosyl-L-methionine is bound by residues 301–303 (GGD), isoleucine 306, 331–332 (TA), methionine 383, and glycine 412.

In the N-terminal section; belongs to the precorrin-2 dehydrogenase / sirohydrochlorin ferrochelatase family. It in the C-terminal section; belongs to the precorrin methyltransferase family.

It carries out the reaction uroporphyrinogen III + 2 S-adenosyl-L-methionine = precorrin-2 + 2 S-adenosyl-L-homocysteine + H(+). It catalyses the reaction precorrin-2 + NAD(+) = sirohydrochlorin + NADH + 2 H(+). The catalysed reaction is siroheme + 2 H(+) = sirohydrochlorin + Fe(2+). Its pathway is cofactor biosynthesis; adenosylcobalamin biosynthesis; precorrin-2 from uroporphyrinogen III: step 1/1. It functions in the pathway cofactor biosynthesis; adenosylcobalamin biosynthesis; sirohydrochlorin from precorrin-2: step 1/1. The protein operates within porphyrin-containing compound metabolism; siroheme biosynthesis; precorrin-2 from uroporphyrinogen III: step 1/1. It participates in porphyrin-containing compound metabolism; siroheme biosynthesis; siroheme from sirohydrochlorin: step 1/1. Its pathway is porphyrin-containing compound metabolism; siroheme biosynthesis; sirohydrochlorin from precorrin-2: step 1/1. Its function is as follows. Multifunctional enzyme that catalyzes the SAM-dependent methylations of uroporphyrinogen III at position C-2 and C-7 to form precorrin-2 via precorrin-1. Then it catalyzes the NAD-dependent ring dehydrogenation of precorrin-2 to yield sirohydrochlorin. Finally, it catalyzes the ferrochelation of sirohydrochlorin to yield siroheme. This Pseudomonas putida (strain W619) protein is Siroheme synthase.